A 690-amino-acid chain; its full sequence is Elongation factor G (690 aa).

The tr-type G domain occupies 8-282 (ERVRNIGIAA…AVIDYLPAPV (275 aa)). GTP-binding positions include 17–24 (AHIDAGKT), 81–85 (DTPGH), and 135–138 (NKMD).

Belongs to the TRAFAC class translation factor GTPase superfamily. Classic translation factor GTPase family. EF-G/EF-2 subfamily.

It localises to the cytoplasm. Catalyzes the GTP-dependent ribosomal translocation step during translation elongation. During this step, the ribosome changes from the pre-translocational (PRE) to the post-translocational (POST) state as the newly formed A-site-bound peptidyl-tRNA and P-site-bound deacylated tRNA move to the P and E sites, respectively. Catalyzes the coordinated movement of the two tRNA molecules, the mRNA and conformational changes in the ribosome. The sequence is that of Elongation factor G from Parasynechococcus marenigrum (strain WH8102).